Consider the following 342-residue polypeptide: Isopentenyl-diphosphate delta-isomerase (342 aa).

11 to 12 is a binding site for substrate; the sequence is RK. Residues Ser-68, 69-71, Ser-99, and Asn-128 each bind FMN; that span reads SMT. 99–101 serves as a coordination point for substrate; the sequence is SQR. Gln-162 contacts substrate. Glu-163 contacts Mg(2+). Residues Lys-194, Ser-219, Thr-224, 275–277, and 296–297 contribute to the FMN site; these read GVR and AK.

The protein belongs to the IPP isomerase type 2 family. In terms of assembly, homooctamer. Dimer of tetramers. FMN is required as a cofactor. NADPH serves as cofactor. The cofactor is Mg(2+).

The protein resides in the cytoplasm. It carries out the reaction isopentenyl diphosphate = dimethylallyl diphosphate. Functionally, involved in the biosynthesis of isoprenoids. Catalyzes the 1,3-allylic rearrangement of the homoallylic substrate isopentenyl (IPP) to its allylic isomer, dimethylallyl diphosphate (DMAPP). The sequence is that of Isopentenyl-diphosphate delta-isomerase from Legionella pneumophila subsp. pneumophila (strain Philadelphia 1 / ATCC 33152 / DSM 7513).